The sequence spans 620 residues: MSQNTKGAGLLISAIGVVYGDIGTSPLYALKETFAGHHPIAVTPDNVFGVLSLVFWTVMLLVTVKYVIVIMRADNHGEGGSLALLALVTELTRGYRVYYPLMLLGVIAAALFYGDSMITPAISVLSAVEGLEVVTPRLTPYVVPITAVVLTGLFMIQKRGTGLVGKLFGPVMCLWFLVLALLGIVNIVAAPHVLGAINPIYAADFIVKHPMMSFFALGSIVLAVTGGEALYTDMGHFGRFPIRVAWFALVLPALLLNYFGQGALLLSDPSAIQNPFFRQVPEWMVVPMVGLATCATVIASQAVISGAYSVARQAIQLGLLPRMTIVHTSGEEEGQIYIPFTNWTLYIAVMALVIGFQSSSNLAAAYGIAVTGTMMIDTILVAFVMALMWRWHWIAVAAVAGTLLLVDLAFFFANIIKVAQGGWFPLFIGVLSFTVLTTWRRGRELVRNQVKKLAVPLDVVMRALGPNVSRARGTAVFLTAATDGVPPALLHNLKHNQTVHQRVVLATVMTADTPYVPDSERVTMTDLGDGFHRLIIRYGFMQTPDVPAALELCKAFGQEFNMMATSFFLSRETYVPSLNPGMAHWRERLFTFMTLNATRATIFFKIPTDRVVELGTQLEI.

12 consecutive transmembrane segments (helical) span residues 10 to 30, 50 to 70, 102 to 122, 138 to 158, 168 to 188, 211 to 231, 246 to 266, 284 to 304, 336 to 356, 368 to 388, 393 to 413, and 415 to 435; these read LLISAIGVVYGDIGTSPLYAL, VLSLVFWTVMLLVTVKYVIVI, MLLGVIAAALFYGDSMITPAI, LTPYVVPITAVVLTGLFMIQK, FGPVMCLWFLVLALLGIVNIV, MMSFFALGSIVLAVTGGEALY, WFALVLPALLLNYFGQGALLL, MVVPMVGLATCATVIASQAVI, IYIPFTNWTLYIAVMALVIGF, IAVTGTMMIDTILVAFVMALM, WIAVAAVAGTLLLVDLAFFFA, and IIKVAQGGWFPLFIGVLSFTV.

The protein belongs to the HAK/KUP transporter (TC 2.A.72) family.

Its subcellular location is the cell inner membrane. The enzyme catalyses K(+)(in) + H(+)(in) = K(+)(out) + H(+)(out). Its function is as follows. Transport of potassium into the cell. Likely operates as a K(+):H(+) symporter. This chain is Probable potassium transport system protein Kup 1, found in Rhodopseudomonas palustris (strain BisB18).